Here is a 574-residue protein sequence, read N- to C-terminus: Interleukin-1 receptor-like 2 (574 aa).

The N-terminal stretch at 1 to 21 (MGVTSLLFCGVFFLLLLFVAA) is a signal peptide. At 22-338 (DTCEDIFMHN…ILIYPVPDFR (317 aa)) the chain is on the extracellular side. Ig-like C2-type domains lie at 25-113 (EDIF…VNLT), 132-215 (PDVY…IRNY), and 225-321 (YGRR…TCHA). Asparagine 43, asparagine 55, and asparagine 111 each carry an N-linked (GlcNAc...) asparagine glycan. An intrachain disulfide couples cysteine 44 to cysteine 97. Cysteines 149 and 199 form a disulfide. N-linked (GlcNAc...) asparagine glycosylation is found at asparagine 231, asparagine 237, asparagine 253, asparagine 269, asparagine 290, and asparagine 302. A disulfide bridge links cysteine 252 with cysteine 319. The chain crosses the membrane as a helical span at residues 339–359 (AYLLGGLMAFLLLVVSVLFIY). Over 360–574 (NSFKIDIMLW…CNAATGLITP (215 aa)) the chain is Cytoplasmic. The TIR domain maps to 384–539 (KLYDAYVLYP…KFWKKVRYHM (156 aa)). Glutamate 470 is an active-site residue.

This sequence belongs to the interleukin-1 receptor family. In terms of assembly, interacts with IL1RAP; the association is enhanced by IL36B indicative for an functional signaling complex and inhibited by IL36RN. In terms of tissue distribution, expressed in bone marrow-derived dendritic cells, splenic CD4(+) T-cells, bone marrow-derived macrophages and bone marrow-derived neutrophils.

The protein resides in the membrane. It carries out the reaction NAD(+) + H2O = ADP-D-ribose + nicotinamide + H(+). Functionally, receptor for interleukin-36 (IL36A, IL36B and IL36G). After binding to interleukin-36 associates with the coreceptor IL1RAP to form the interleukin-36 receptor complex which mediates interleukin-36-dependent activation of NF-kappa-B, MAPK and other pathways. The IL-36 signaling system is thought to be present in epithelial barriers and to take part in local inflammatory response; it is similar to the IL-1 system. Seems to be involved in skin inflammatory response by induction of the IL-23/IL-17/IL-22 pathway. The chain is Interleukin-1 receptor-like 2 (Il1rl2) from Mus musculus (Mouse).